Reading from the N-terminus, the 1036-residue chain is Isoleucine--tRNA ligase (1036 aa).

Residues proline 46 to histidine 56 carry the 'HIGH' region motif. The 'KMSKS' region signature appears at lysine 589–arginine 593. Lysine 592 contributes to the ATP binding site.

This sequence belongs to the class-I aminoacyl-tRNA synthetase family. IleS type 2 subfamily. As to quaternary structure, monomer. Zn(2+) serves as cofactor.

It is found in the cytoplasm. The catalysed reaction is tRNA(Ile) + L-isoleucine + ATP = L-isoleucyl-tRNA(Ile) + AMP + diphosphate. Its function is as follows. Catalyzes the attachment of isoleucine to tRNA(Ile). As IleRS can inadvertently accommodate and process structurally similar amino acids such as valine, to avoid such errors it has two additional distinct tRNA(Ile)-dependent editing activities. One activity is designated as 'pretransfer' editing and involves the hydrolysis of activated Val-AMP. The other activity is designated 'posttransfer' editing and involves deacylation of mischarged Val-tRNA(Ile). This is Isoleucine--tRNA ligase from Chlamydia muridarum (strain MoPn / Nigg).